Here is a 574-residue protein sequence, read N- to C-terminus: Galectin-3-binding protein (574 aa).

Positions 1 to 18 (MALLWLLSVFLLVPGTQG) are cleaved as a signal peptide. The SRCR domain occupies 24–124 (MRLVNGASAS…HEKDAGVVCS (101 aa)). Intrachain disulfides connect C49–C113, C62–C123, and C93–C103. Residues N69, N96, N102, and N125 are each glycosylated (N-linked (GlcNAc...) asparagine). The BTB domain occupies 153-221 (CDLFIQVTGQ…FYSRRIEVSM (69 aa)). Residues 260–360 (PLELYEYAQA…MLPQELFELQ (101 aa)) enclose the BACK domain. Residues N362, N398, N540, and N569 are each glycosylated (N-linked (GlcNAc...) asparagine).

In terms of assembly, homodimers and homomultimers. The multimers form ring-like structures with a diameter of 30-40 nm. Binds LGALS1 and LGALS3. Binds ITGB1, COL4A1, COL5A1, COL6A1, FN1 and NID. The unglycosylated form interacts with PDE4DIP; this interaction, which is PDE4DIP isoform-specific, may connect a pericentrosomal complex to the gamma-tubulin ring complex (gamma-TuRC) to promote microtubule assembly and acetylation. As to expression, detected in thyroid (at protein level).

The protein resides in the secreted. It is found in the extracellular space. Its subcellular location is the extracellular matrix. Its function is as follows. Promotes integrin-mediated cell adhesion. May stimulate host defense against viruses and tumor cells. The chain is Galectin-3-binding protein (Lgals3bp) from Rattus norvegicus (Rat).